Here is a 350-residue protein sequence, read N- to C-terminus: Transmembrane protein 185B (350 aa).

7 helical membrane-spanning segments follow: residues 16–36 (LIYT…DGII), 41–61 (WAVF…ASVG), 81–101 (FKAM…EVLV), 111–131 (FWLL…AACV), 168–188 (WLVV…VVLY), 211–231 (VTMA…EVLL), and 240–260 (TFSY…LMAT).

The protein belongs to the TMEM185 family.

Its subcellular location is the membrane. This chain is Transmembrane protein 185B (TMEM185B), found in Homo sapiens (Human).